A 126-amino-acid polypeptide reads, in one-letter code: Small ribosomal subunit protein uS12 (126 aa).

Polar residues predominate over residues 1 to 16 (MPTVNQLVRQGRTMNK). Positions 1–24 (MPTVNQLVRQGRTMNKTKTKSPAL) are disordered. The residue at position 89 (Asp-89) is a 3-methylthioaspartic acid.

Belongs to the universal ribosomal protein uS12 family. In terms of assembly, part of the 30S ribosomal subunit. Contacts proteins S8 and S17. May interact with IF1 in the 30S initiation complex.

Functionally, with S4 and S5 plays an important role in translational accuracy. Its function is as follows. Interacts with and stabilizes bases of the 16S rRNA that are involved in tRNA selection in the A site and with the mRNA backbone. Located at the interface of the 30S and 50S subunits, it traverses the body of the 30S subunit contacting proteins on the other side and probably holding the rRNA structure together. The combined cluster of proteins S8, S12 and S17 appears to hold together the shoulder and platform of the 30S subunit. This Elusimicrobium minutum (strain Pei191) protein is Small ribosomal subunit protein uS12.